A 58-amino-acid polypeptide reads, in one-letter code: Large ribosomal subunit protein uL30 (58 aa).

It belongs to the universal ribosomal protein uL30 family. In terms of assembly, part of the 50S ribosomal subunit.

The chain is Large ribosomal subunit protein uL30 from Blochmanniella floridana.